Here is a 172-residue protein sequence, read N- to C-terminus: Small ribosomal subunit protein uS5 (172 aa).

The S5 DRBM domain occupies 17-80; the sequence is LREKMIAVNR…DEARRKMVKV (64 aa).

It belongs to the universal ribosomal protein uS5 family. Part of the 30S ribosomal subunit. Contacts proteins S4 and S8.

Its function is as follows. With S4 and S12 plays an important role in translational accuracy. Functionally, located at the back of the 30S subunit body where it stabilizes the conformation of the head with respect to the body. The protein is Small ribosomal subunit protein uS5 of Ralstonia nicotianae (strain ATCC BAA-1114 / GMI1000) (Ralstonia solanacearum).